The following is a 609-amino-acid chain: Probable translation initiation factor IF-2 (609 aa).

The tr-type G domain occupies 12-230 (LRQPIVAVLG…VLAGLAQRYM (219 aa)). Residues 21 to 28 (GHVDHGKT) are G1. A GTP-binding site is contributed by 21–28 (GHVDHGKT). Positions 46-50 (QITQH) are G2. The interval 86 to 89 (DTPG) is G3. Residues 86–90 (DTPGH) and 140–143 (NKID) each bind GTP. A G4 region spans residues 140 to 143 (NKID). A G5 region spans residues 208 to 210 (SAK).

Belongs to the TRAFAC class translation factor GTPase superfamily. Classic translation factor GTPase family. IF-2 subfamily.

Function in general translation initiation by promoting the binding of the formylmethionine-tRNA to ribosomes. Seems to function along with eIF-2. This is Probable translation initiation factor IF-2 from Ignicoccus hospitalis (strain KIN4/I / DSM 18386 / JCM 14125).